We begin with the raw amino-acid sequence, 54 residues long: Relaxin (54 aa).

Residue Gln-1 is modified to Pyrrolidone carboxylic acid. Cystine bridges form between Cys-13–Cys-41, Cys-25–Cys-54, and Cys-40–Cys-45.

It belongs to the insulin family. As to quaternary structure, heterodimer of a B chain and an A chain linked by two disulfide bonds.

It is found in the secreted. Its function is as follows. The function of relaxin in an oviparous species is not yet known. The chain is Relaxin from Squalus acanthias (Spiny dogfish).